We begin with the raw amino-acid sequence, 812 residues long: Valine--tRNA ligase (812 aa).

The short motif at 46–56 (PTVSGQLHIGH) is the 'HIGH' region element. The short motif at 536–540 (KMSKS) is the 'KMSKS' region element. Lysine 539 provides a ligand contact to ATP.

This sequence belongs to the class-I aminoacyl-tRNA synthetase family. ValS type 2 subfamily. As to quaternary structure, monomer.

It localises to the cytoplasm. The catalysed reaction is tRNA(Val) + L-valine + ATP = L-valyl-tRNA(Val) + AMP + diphosphate. In terms of biological role, catalyzes the attachment of valine to tRNA(Val). As ValRS can inadvertently accommodate and process structurally similar amino acids such as threonine, to avoid such errors, it has a 'posttransfer' editing activity that hydrolyzes mischarged Thr-tRNA(Val) in a tRNA-dependent manner. The sequence is that of Valine--tRNA ligase from Rickettsia bellii (strain RML369-C).